Here is a 195-residue protein sequence, read N- to C-terminus: ALK and LTK ligand 2b (195 aa).

Disulfide bonds link Cys156-Cys192 and Cys170-Cys179.

This sequence belongs to the ALKAL family. Homodimer. Highly expressed in the swim bladder and single cells of unknown identity in the head.

The protein resides in the secreted. It is found in the cell membrane. Cytokine that acts as a physiological ligand for receptor tyrosine kinases LTK and ALK. Required for neural crest cell differentiation and iridophore development during embryonic iridophore development and adult stripe development by acting as a receptor for LTK. Also required for iridophore formation in the adult eye. In Danio rerio (Zebrafish), this protein is ALK and LTK ligand 2b.